The chain runs to 270 residues: Alpha N-terminal protein methyltransferase 1 (270 aa).

Residues glycine 114, arginine 119, 137-139, 165-166, and glutamine 180 contribute to the S-adenosyl-L-methionine site; these read EQN and LQ.

It belongs to the methyltransferase superfamily. NTM1 family.

The enzyme catalyses N-terminal L-alanyl-L-prolyl-L-lysyl-[protein] + 3 S-adenosyl-L-methionine = N-terminal N,N,N-trimethyl-L-alanyl-L-prolyl-L-lysyl-[protein] + 3 S-adenosyl-L-homocysteine + 3 H(+). It catalyses the reaction N-terminal L-seryl-L-prolyl-L-lysyl-[protein] + 3 S-adenosyl-L-methionine = N-terminal N,N,N-trimethyl-L-seryl-L-prolyl-L-lysyl-[protein] + 3 S-adenosyl-L-homocysteine + 3 H(+). The catalysed reaction is N-terminal L-prolyl-L-prolyl-L-lysyl-[protein] + 2 S-adenosyl-L-methionine = N-terminal N,N-dimethyl-L-prolyl-L-prolyl-L-lysyl-[protein] + 2 S-adenosyl-L-homocysteine + 2 H(+). In terms of biological role, alpha-N-methyltransferase that methylates the N-terminus of target proteins containing the N-terminal motif [Ala/Pro/Ser]-Pro-Lys when the initiator Met is cleaved. Specifically catalyzes mono-, di- or tri-methylation of exposed alpha-amino group of Ala or Ser residue in the [Ala/Ser]-Pro-Lys motif and mono- or di-methylation of Pro in the Pro-Pro-Lys motif. The chain is Alpha N-terminal protein methyltransferase 1 from Dictyostelium discoideum (Social amoeba).